The chain runs to 517 residues: Crotonobetaine/carnitine--CoA ligase (517 aa).

The protein belongs to the ATP-dependent AMP-binding enzyme family.

The enzyme catalyses 4-(trimethylamino)butanoate + ATP + CoA = 4-(trimethylamino)butanoyl-CoA + AMP + diphosphate. It catalyses the reaction crotonobetaine + ATP + CoA = crotonobetainyl-CoA + AMP + diphosphate. The catalysed reaction is (R)-carnitine + ATP + CoA = (R)-carnitinyl-CoA + AMP + diphosphate. It functions in the pathway amine and polyamine metabolism; carnitine metabolism. Catalyzes the transfer of CoA to carnitine, generating the initial carnitinyl-CoA needed for the CaiB reaction cycle. Also has activity toward crotonobetaine and gamma-butyrobetaine. This Salmonella heidelberg (strain SL476) protein is Crotonobetaine/carnitine--CoA ligase.